The primary structure comprises 351 residues: uncharacterized protein (351 aa).

An N-terminal signal peptide occupies residues 1 to 27 (MKNKKRVLIASSLSCAILLLSAATTQA). Residues 27–71 (ANSAHKDSQDQNKKEHVDKSQQKDKRNVTNKDKNSTAPDDIGKNG) are disordered. A compositionally biased stretch (basic and acidic residues) spans 30–60 (AHKDSQDQNKKEHVDKSQQKDKRNVTNKDKN).

Belongs to the aerolysin family.

This is an uncharacterized protein from Staphylococcus aureus (strain USA300).